Reading from the N-terminus, the 615-residue chain is Medium-chain acyl-CoA ligase ACSF2, mitochondrial (615 aa).

Residues 1-41 (MAVYHGMLRFGRLCIASLGARGPRTLLSRPRPNSKLQSVRA) constitute a mitochondrion transit peptide. The residue at position 179 (lysine 179) is an N6-acetyllysine. Residue lysine 182 is modified to N6-acetyllysine; alternate. At lysine 182 the chain carries N6-succinyllysine; alternate. Lysine 199 carries the N6-acetyllysine modification. 263–271 (TSGTTGNPK) contributes to the ATP binding site. Residues lysine 340 and lysine 398 each carry the N6-acetyllysine modification. Lysine 478 is modified (N6-succinyllysine). ATP is bound by residues aspartate 493 and arginine 508. The residue at position 510 (lysine 510) is an N6-acetyllysine. Residues lysine 544 and lysine 570 each carry the N6-acetyllysine; alternate modification. N6-succinyllysine; alternate is present on residues lysine 544 and lysine 570. Lysine 599 serves as a coordination point for ATP. N6-succinyllysine is present on lysine 599.

This sequence belongs to the ATP-dependent AMP-binding enzyme family.

It is found in the mitochondrion. It carries out the reaction a medium-chain fatty acid + ATP + CoA = a medium-chain fatty acyl-CoA + AMP + diphosphate. The enzyme catalyses octanoate + ATP + CoA = octanoyl-CoA + AMP + diphosphate. Functionally, acyl-CoA synthases catalyze the initial reaction in fatty acid metabolism, by forming a thioester with CoA. Has some preference toward medium-chain substrates. Plays a role in adipocyte differentiation. This Mus musculus (Mouse) protein is Medium-chain acyl-CoA ligase ACSF2, mitochondrial.